An 803-amino-acid polypeptide reads, in one-letter code: Pre-mRNA-splicing ATP-dependent RNA helicase prp28 (803 aa).

Disordered regions lie at residues 1–83 and 115–210; these read MDDI…PLSV and KRAK…PVDD. Pro residues predominate over residues 11 to 62; it reads EVPPPQPPPEPVERPPTPPPPPPEESVAPPPPPEVVAPPPPPEDLPPAPPPP. A compositionally biased stretch (basic and acidic residues) spans 115 to 126; it reads KRAKEVEAERRL. Over residues 135–146 the composition is skewed to polar residues; that stretch reads SATQSPSVSSEV. The Q motif signature appears at 367–395; sequence RSWDESGLPKRLMELVNKVGYKEPTPIQR. One can recognise a Helicase ATP-binding domain in the interval 398–603; it reads IPIAMQSRDL…RKYLRRPAIV (206 aa). ATP is bound at residue 411-418; that stretch reads AVTGSGKT. The DEAD box signature appears at 526 to 529; sequence DEAD. One can recognise a Helicase C-terminal domain in the interval 614–777; that stretch reads TVEQRVEFIA…RLPEELRKHE (164 aa). Residues 773–803 are disordered; it reads LRKHEAAQSKPTRGFAKKNDDNSAFGSKGGW.

The protein belongs to the DEAD box helicase family. DDX23/PRP28 subfamily. Component of the U5 snRNP complex.

It is found in the cytoplasm. The protein localises to the nucleus. The enzyme catalyses ATP + H2O = ADP + phosphate + H(+). In terms of biological role, ATP-dependent RNA helicase involved in mRNA splicing. May destabilize the U1/5'-splice site duplex to permit an effective competition for the 5'-splice site by the U6 snRNA, resulting in the switch between U1 and U6 at the 5'-splice site. May also act to unwind the U4/U6 base-pairing interaction in the U4/U6/U5 snRNP, facilitating the first covalent step of splicing. This is Pre-mRNA-splicing ATP-dependent RNA helicase prp28 (prp28) from Aspergillus oryzae (strain ATCC 42149 / RIB 40) (Yellow koji mold).